A 606-amino-acid polypeptide reads, in one-letter code: Glutamine--fructose-6-phosphate aminotransferase [isomerizing] (606 aa).

The Nucleophile; for GATase activity role is filled by cysteine 2. The Glutamine amidotransferase type-2 domain occupies 2–218 (CGIFGYLGQR…SGELAVLRIG (217 aa)). SIS domains lie at 278–424 (FAES…QRQE) and 455–596 (WRCR…VDRP). The active-site For Fru-6P isomerization activity is lysine 601.

As to quaternary structure, homodimer.

The protein resides in the cytoplasm. It carries out the reaction D-fructose 6-phosphate + L-glutamine = D-glucosamine 6-phosphate + L-glutamate. Functionally, catalyzes the first step in hexosamine metabolism, converting fructose-6P into glucosamine-6P using glutamine as a nitrogen source. The chain is Glutamine--fructose-6-phosphate aminotransferase [isomerizing] from Chlamydia muridarum (strain MoPn / Nigg).